Consider the following 101-residue polypeptide: Urease subunit beta (101 aa).

This sequence belongs to the urease beta subunit family. As to quaternary structure, heterotrimer of UreA (gamma), UreB (beta) and UreC (alpha) subunits. Three heterotrimers associate to form the active enzyme.

It is found in the cytoplasm. It carries out the reaction urea + 2 H2O + H(+) = hydrogencarbonate + 2 NH4(+). It participates in nitrogen metabolism; urea degradation; CO(2) and NH(3) from urea (urease route): step 1/1. In Paraburkholderia xenovorans (strain LB400), this protein is Urease subunit beta.